The chain runs to 546 residues: Chaperonin GroEL (546 aa).

ATP is bound by residues 30–33 (TLGP), Lys51, 87–91 (DGTTT), Gly415, and Asp495.

This sequence belongs to the chaperonin (HSP60) family. As to quaternary structure, forms a cylinder of 14 subunits composed of two heptameric rings stacked back-to-back. Interacts with the co-chaperonin GroES.

The protein localises to the cytoplasm. It carries out the reaction ATP + H2O + a folded polypeptide = ADP + phosphate + an unfolded polypeptide.. Functionally, together with its co-chaperonin GroES, plays an essential role in assisting protein folding. The GroEL-GroES system forms a nano-cage that allows encapsulation of the non-native substrate proteins and provides a physical environment optimized to promote and accelerate protein folding. This Brucella melitensis biotype 1 (strain ATCC 23456 / CCUG 17765 / NCTC 10094 / 16M) protein is Chaperonin GroEL.